Consider the following 97-residue polypeptide: Integration host factor subunit alpha (97 aa).

Residues 50–71 (FGNFTLRDKPQRPGRNPKTGEE) form a disordered region.

It belongs to the bacterial histone-like protein family. Heterodimer of an alpha and a beta chain.

This protein is one of the two subunits of integration host factor, a specific DNA-binding protein that functions in genetic recombination as well as in transcriptional and translational control. This chain is Integration host factor subunit alpha, found in Legionella pneumophila (strain Paris).